We begin with the raw amino-acid sequence, 162 residues long: NADH-quinone oxidoreductase subunit I (162 aa).

4Fe-4S ferredoxin-type domains lie at leucine 53 to glutamate 83 and arginine 93 to asparagine 122. Cysteine 63, cysteine 66, cysteine 69, cysteine 73, cysteine 102, cysteine 105, cysteine 108, and cysteine 112 together coordinate [4Fe-4S] cluster.

The protein belongs to the complex I 23 kDa subunit family. NDH-1 is composed of 14 different subunits. Subunits NuoA, H, J, K, L, M, N constitute the membrane sector of the complex. It depends on [4Fe-4S] cluster as a cofactor.

The protein resides in the cell inner membrane. The enzyme catalyses a quinone + NADH + 5 H(+)(in) = a quinol + NAD(+) + 4 H(+)(out). Its function is as follows. NDH-1 shuttles electrons from NADH, via FMN and iron-sulfur (Fe-S) centers, to quinones in the respiratory chain. The immediate electron acceptor for the enzyme in this species is believed to be ubiquinone. Couples the redox reaction to proton translocation (for every two electrons transferred, four hydrogen ions are translocated across the cytoplasmic membrane), and thus conserves the redox energy in a proton gradient. This is NADH-quinone oxidoreductase subunit I from Paramagnetospirillum magneticum (strain ATCC 700264 / AMB-1) (Magnetospirillum magneticum).